Here is a 483-residue protein sequence, read N- to C-terminus: Rhamnulokinase (483 aa).

11-15 (ASSGR) contributes to the ATP binding site. Substrate-binding positions include Gly79 and 234–236 (HDT). Asp235 serves as the catalytic Proton acceptor. Thr257 is an ATP binding site. Asn294 is a substrate binding site. Residue Gln302 coordinates ATP. A disulfide bridge connects residues Cys352 and Cys369. ATP is bound at residue Gly401.

This sequence belongs to the rhamnulokinase family. The cofactor is Mg(2+).

The catalysed reaction is L-rhamnulose + ATP = L-rhamnulose 1-phosphate + ADP + H(+). The protein operates within carbohydrate degradation; L-rhamnose degradation; glycerone phosphate from L-rhamnose: step 2/3. In terms of biological role, involved in the catabolism of L-rhamnose (6-deoxy-L-mannose). Catalyzes the transfer of the gamma-phosphate group from ATP to the 1-hydroxyl group of L-rhamnulose to yield L-rhamnulose 1-phosphate. The sequence is that of Rhamnulokinase from Listeria monocytogenes serotype 4b (strain F2365).